Reading from the N-terminus, the 92-residue chain is Small ribosomal subunit protein uS19 (92 aa).

Belongs to the universal ribosomal protein uS19 family.

Functionally, protein S19 forms a complex with S13 that binds strongly to the 16S ribosomal RNA. The sequence is that of Small ribosomal subunit protein uS19 from Chromobacterium violaceum (strain ATCC 12472 / DSM 30191 / JCM 1249 / CCUG 213 / NBRC 12614 / NCIMB 9131 / NCTC 9757 / MK).